We begin with the raw amino-acid sequence, 429 residues long: Serum response factor-binding protein 1 (429 aa).

Ala2 bears the N-acetylalanine mark. Coiled-coil stretches lie at residues 42–67 (KGTE…AMKE) and 108–146 (LLKK…NHSE). 2 disordered regions span residues 131–157 (AEVE…NGSN) and 176–429 (LAKK…TFDD). Residues 146-157 (ENTLYSNDNGSN) show a composition bias toward polar residues. Residues 183–195 (NSKEKIAKMEHGP) are compositionally biased toward basic and acidic residues. Lys190 participates in a covalent cross-link: Glycyl lysine isopeptide (Lys-Gly) (interchain with G-Cter in SUMO2). A phosphoserine mark is found at Ser203, Ser205, Ser264, Ser279, and Ser281. The span at 249–265 (GGEEFCEEEKEYFDDST) shows a compositional bias: acidic residues. Residues 296-341 (KESSCHSSVKEQKPLEKVFLKEDTGETHGDTRNDKIKPSTETRKLE) are compositionally biased toward basic and acidic residues. Lys316 is covalently cross-linked (Glycyl lysine isopeptide (Lys-Gly) (interchain with G-Cter in SUMO2)). A phosphoserine mark is found at Ser349, Ser351, and Ser367. Residues 357–367 (NFKEQAPKTRS) are compositionally biased toward basic and acidic residues. Residues 373 to 383 (NEPQIKNQFNK) show a composition bias toward polar residues.

As to quaternary structure, interacts with SRF. Forms complexes with SRF and SRF cofactors ARID2, MYOCD and NKX2-5. Interacts with the N-terminus of SLC2A4. As to expression, abundantly expressed in heart and skeletal muscle, and at much lower levels in brain and lung.

The protein localises to the cytoplasm. Its subcellular location is the perinuclear region. Its function is as follows. May be involved in regulating transcriptional activation of cardiac genes during the aging process. May play a role in biosynthesis and/or processing of SLC2A4 in adipose cells. In Homo sapiens (Human), this protein is Serum response factor-binding protein 1.